The sequence spans 238 residues: MSSRTGHEKGRRTSQSKTGHFKRSGKPNRVEDQTTRRHPTRTAKAKAKAKANKPRVDLQNRKVIIFNKPYDTLSQFTDGDGRKTLADYIPVKDVYAAGRLDRDSEGLMVLTNDGILQAKLTQPKSKSPKTYWVQVDGAPQEQDLEKLRKGVELKDGMTLPAKVEVIDAPTIWERNPPVRFRANIPTTWLAITIIEGRNRQVRRMTAHIGFPTLRLVRYSMGDITLGDLQPGQWKEIQL.

The disordered stretch occupies residues 1 to 54; the sequence is MSSRTGHEKGRRTSQSKTGHFKRSGKPNRVEDQTTRRHPTRTAKAKAKAKANKP. 2 stretches are compositionally biased toward basic residues: residues 9 to 26 and 36 to 53; these read KGRR…RSGK and RRHP…KANK. Asp-101 (nucleophile) is an active-site residue.

This sequence belongs to the pseudouridine synthase RsuA family.

It catalyses the reaction uridine(2457) in 23S rRNA = pseudouridine(2457) in 23S rRNA. Functionally, responsible for synthesis of pseudouridine from uracil-2457 in 23S ribosomal RNA. The protein is Ribosomal large subunit pseudouridine synthase E (rluE) of Vibrio parahaemolyticus serotype O3:K6 (strain RIMD 2210633).